Here is a 352-residue protein sequence, read N- to C-terminus: Glycerol-1-phosphate dehydrogenase [NAD(P)+] (352 aa).

NAD(+)-binding positions include 91–95 and 113–116; these read GRVID and TVAS. D118 is a substrate binding site. Residue S122 participates in NAD(+) binding. E169 lines the substrate pocket. Zn(2+)-binding residues include E169 and H249. Substrate is bound at residue H253. H269 is a Zn(2+) binding site.

It belongs to the glycerol-1-phosphate dehydrogenase family. Homodimer. It depends on Zn(2+) as a cofactor.

The protein resides in the cytoplasm. The catalysed reaction is sn-glycerol 1-phosphate + NAD(+) = dihydroxyacetone phosphate + NADH + H(+). It carries out the reaction sn-glycerol 1-phosphate + NADP(+) = dihydroxyacetone phosphate + NADPH + H(+). It functions in the pathway membrane lipid metabolism; glycerophospholipid metabolism. In terms of biological role, catalyzes the NAD(P)H-dependent reduction of dihydroxyacetonephosphate (DHAP or glycerone phosphate) to glycerol 1-phosphate (G1P). The G1P thus generated is used as the glycerophosphate backbone of phospholipids in the cellular membranes of Archaea. The polypeptide is Glycerol-1-phosphate dehydrogenase [NAD(P)+] (Caldivirga maquilingensis (strain ATCC 700844 / DSM 13496 / JCM 10307 / IC-167)).